Here is a 630-residue protein sequence, read N- to C-terminus: 1-deoxy-D-xylulose-5-phosphate synthase (630 aa).

Thiamine diphosphate-binding positions include H72 and 113–115; that span reads GHS. Residue D144 participates in Mg(2+) binding. Thiamine diphosphate-binding positions include 145–146, N173, Y284, and E367; that span reads GA. N173 serves as a coordination point for Mg(2+).

Belongs to the transketolase family. DXPS subfamily. As to quaternary structure, homodimer. It depends on Mg(2+) as a cofactor. Thiamine diphosphate serves as cofactor.

It carries out the reaction D-glyceraldehyde 3-phosphate + pyruvate + H(+) = 1-deoxy-D-xylulose 5-phosphate + CO2. It participates in metabolic intermediate biosynthesis; 1-deoxy-D-xylulose 5-phosphate biosynthesis; 1-deoxy-D-xylulose 5-phosphate from D-glyceraldehyde 3-phosphate and pyruvate: step 1/1. Functionally, catalyzes the acyloin condensation reaction between C atoms 2 and 3 of pyruvate and glyceraldehyde 3-phosphate to yield 1-deoxy-D-xylulose-5-phosphate (DXP). This chain is 1-deoxy-D-xylulose-5-phosphate synthase, found in Bacillus cereus (strain ATCC 10987 / NRS 248).